The chain runs to 32 residues: Enolase (32 aa).

This sequence belongs to the enolase family. As to quaternary structure, homodimer. Mg(2+) is required as a cofactor.

Its subcellular location is the cytoplasm. It catalyses the reaction (2R)-2-phosphoglycerate = phosphoenolpyruvate + H2O. The protein operates within carbohydrate degradation; glycolysis; pyruvate from D-glyceraldehyde 3-phosphate: step 4/5. This Imperata cylindrica (Cogon grass) protein is Enolase.